A 130-amino-acid chain; its full sequence is MANKKNAPRKRRVKKNIEAGVAHIHSTFNNTLVMITDPNGNAVAWSSAGSLGFKGSRKSTPFAAQMAAEAAGKEAMEHGMKSIEVAVKGPGSGREAAIRSLQATGLEVTAIRDVTPVPHNGSRPPKRRRV.

The protein belongs to the universal ribosomal protein uS11 family. As to quaternary structure, part of the 30S ribosomal subunit. Interacts with proteins S7 and S18. Binds to IF-3.

Functionally, located on the platform of the 30S subunit, it bridges several disparate RNA helices of the 16S rRNA. Forms part of the Shine-Dalgarno cleft in the 70S ribosome. The sequence is that of Small ribosomal subunit protein uS11 from Latilactobacillus sakei subsp. sakei (strain 23K) (Lactobacillus sakei subsp. sakei).